The sequence spans 171 residues: Adenine phosphoribosyltransferase (171 aa).

It belongs to the purine/pyrimidine phosphoribosyltransferase family. In terms of assembly, homodimer.

The protein localises to the cytoplasm. The catalysed reaction is AMP + diphosphate = 5-phospho-alpha-D-ribose 1-diphosphate + adenine. It participates in purine metabolism; AMP biosynthesis via salvage pathway; AMP from adenine: step 1/1. Catalyzes a salvage reaction resulting in the formation of AMP, that is energically less costly than de novo synthesis. This is Adenine phosphoribosyltransferase from Mycoplasma mobile (strain ATCC 43663 / 163K / NCTC 11711) (Mesomycoplasma mobile).